A 237-amino-acid chain; its full sequence is Ribosomal RNA small subunit methyltransferase G (237 aa).

Residues 1–25 (MASRHSPQTAAQPDAADKAQALRLT) are disordered. Low complexity predominate over residues 7-21 (PQTAAQPDAADKAQA). Positions 85, 90, and 155 each coordinate S-adenosyl-L-methionine.

It belongs to the methyltransferase superfamily. RNA methyltransferase RsmG family.

It is found in the cytoplasm. It catalyses the reaction guanosine(527) in 16S rRNA + S-adenosyl-L-methionine = N(7)-methylguanosine(527) in 16S rRNA + S-adenosyl-L-homocysteine. Specifically methylates the N7 position of guanine in position 527 of 16S rRNA. This is Ribosomal RNA small subunit methyltransferase G from Rhodopseudomonas palustris (strain HaA2).